Here is a 249-residue protein sequence, read N- to C-terminus: Methyltransferase 1 (249 aa).

This sequence belongs to the FkbM methyltransferase family.

It participates in secondary metabolite biosynthesis. Methyltransferase; part of the pathway that mediates the biosynthesis of tenellin-type 2-pyridones, iron-chelating compounds involved in iron stress tolerance, competition with the natural competitor fungus Metarhizium robertsii and insect hosts infection. Methylates pyridovericin-N-O-(beta-D-glucopyranoside) produced by the UDP-glucosyltransferase GT1 to yield pyridovericin-N-O-(4-O-methyl-beta-D-glucopyranoside) (PMGP). The pathway begins with the assembly of the polyketide-amino acid backbone by the hybrid PKS-NRPS tenS with the help of the enoyl reductase tenC. These enzymes catalyze the synthesis of the pyrrolidine-2-dione intermediates pretellinin A, 11-hydropretellenin A, 12-hydropretellenin A, 13-hydropretellenin A, 14-hydropretellenin A, 12-oxopretellenin A and prototellinin D. The cytochrome P450 monooxygenase tenA then catalyzes an oxidative ring expansion of pretenellin A and 14-hydropretellenin A to form the 2-pyridone core, leading to pretenellin B and pyridovericin, respectively. The cytochrome P450 monooxygenase tenB is then required for the selective N-hydroxylation of the 2-pyridone nitrogen of yield tellinin and 15-hydroxytellenin (15-HT), respectively. The UDP-glucosyltransferase GT1 and the methyltransferase MT1, located outside the tenS gene cluster, contribute to the stepwise glycosylation and methylation of 15-HT to obtain the glycoside pyridovericin-N-O-(4-O-methyl-beta-D-glucopyranoside) (PMGP). Additional related compounds such as 1-O-methyl-15-HT, (8Z)-1-O-methyl-15-HT, and O-methyltenellin A are also produced but the enzymes involved in their biosynthesis have still to be determined. The sequence is that of Methyltransferase 1 from Beauveria bassiana (strain ARSEF 2860) (White muscardine disease fungus).